Here is a 171-residue protein sequence, read N- to C-terminus: Co-chaperone protein HscB homolog (171 aa).

Residues 2–74 (NHFELFGLPN…VSRAEYILSE (73 aa)) form the J domain.

This sequence belongs to the HscB family. In terms of assembly, interacts with HscA and stimulates its ATPase activity.

Co-chaperone involved in the maturation of iron-sulfur cluster-containing proteins. Seems to help targeting proteins to be folded toward HscA. This is Co-chaperone protein HscB homolog from Aliivibrio fischeri (strain ATCC 700601 / ES114) (Vibrio fischeri).